The sequence spans 172 residues: Large ribosomal subunit protein uL10 (172 aa).

This sequence belongs to the universal ribosomal protein uL10 family. Part of the ribosomal stalk of the 50S ribosomal subunit. The N-terminus interacts with L11 and the large rRNA to form the base of the stalk. The C-terminus forms an elongated spine to which L12 dimers bind in a sequential fashion forming a multimeric L10(L12)X complex.

Forms part of the ribosomal stalk, playing a central role in the interaction of the ribosome with GTP-bound translation factors. This Francisella tularensis subsp. tularensis (strain FSC 198) protein is Large ribosomal subunit protein uL10.